We begin with the raw amino-acid sequence, 102 residues long: Hypersensitivity to hygromycin-B protein 1 (102 aa).

An N-terminal signal peptide occupies residues 1 to 17 (MSLSFLLFSPFLPPCFS). Residues 18-38 (SISICLSVLSTVSFFFAFTIP) form a helical membrane-spanning segment. The Cytoplasmic segment spans residues 39–69 (HYVLRCGSVDEWHIHSSAEDFRTQRCVCAVK). Residues 70–90 (LSASLLGCLLACASWSLLLEV) traverse the membrane as a helical segment. The Extracellular segment spans residues 91–102 (SRIKWHVGTAYS).

The protein localises to the membrane. In terms of biological role, involved in vacuolar trafficking. This chain is Hypersensitivity to hygromycin-B protein 1, found in Saccharomyces cerevisiae (strain ATCC 204508 / S288c) (Baker's yeast).